The chain runs to 704 residues: Histone-lysine N-methyltransferase, H3 lysine-9 specific SUVH1 (704 aa).

Disordered stretches follow at residues 1-21 (MEQG…TRVL) and 68-176 (PFVA…QAEG). Composition is skewed to polar residues over residues 80–90 (ESSQQTPSGVP) and 109–121 (SFRT…GNSG). The segment covering 159-170 (GKKRGRPKKPRR) has biased composition (basic residues). Residues 265 to 412 (GNAPGIEVGD…CNVFKYKLLR (148 aa)) enclose the YDG domain. The region spanning 487–548 (PSCHCVGGCQ…NCRNRMSQGG (62 aa)) is the Pre-SET domain. Zn(2+)-binding residues include C489, C491, C495, C502, C504, C530, C534, C536, and C540. Residues 551 to 681 (ARLEVFKTKN…PMQELTFDYG (131 aa)) form the SET domain. S-adenosyl-L-methionine-binding positions include 561–563 (RGW), D593, Y595, R635, and 638–639 (NH). Positions 641, 692, 694, and 699 each coordinate Zn(2+). The Post-SET domain occupies 688–704 (RRKKCLCGSLNCRGYFY).

It belongs to the class V-like SAM-binding methyltransferase superfamily. Histone-lysine methyltransferase family. Suvar3-9 subfamily. In terms of assembly, interacts with LHP1. Expressed in roots, stems, leaves and flowers.

The protein localises to the nucleus. It is found in the chromosome. The catalysed reaction is N(6)-methyl-L-lysyl(27)-[histone H3] + S-adenosyl-L-methionine = N(6),N(6)-dimethyl-L-lysyl(27)-[histone H3] + S-adenosyl-L-homocysteine + H(+). The enzyme catalyses L-lysyl(9)-[histone H3] + 2 S-adenosyl-L-methionine = N(6),N(6)-dimethyl-L-lysyl(9)-[histone H3] + 2 S-adenosyl-L-homocysteine + 2 H(+). It catalyses the reaction L-lysyl(27)-[histone H3] + S-adenosyl-L-methionine = N(6)-methyl-L-lysyl(27)-[histone H3] + S-adenosyl-L-homocysteine + H(+). In terms of biological role, histone methyltransferase. Methylates in vitro both 'Lys-9' and 'Lys-27' of histone H3. Required for in vivo dimethylation of 'Lys-9'. H3 'Lys-9' methylation represents a specific tag for epigenetic control for plant development and transcriptional repression. The chain is Histone-lysine N-methyltransferase, H3 lysine-9 specific SUVH1 (SUVH1) from Nicotiana tabacum (Common tobacco).